The primary structure comprises 346 residues: DNA polymerase IV 2 (346 aa).

In terms of domain architecture, UmuC spans isoleucine 9–glycine 191. 2 residues coordinate Mg(2+): aspartate 13 and aspartate 111. Residue glutamate 112 is part of the active site.

Belongs to the DNA polymerase type-Y family. As to quaternary structure, monomer. Requires Mg(2+) as cofactor.

The protein localises to the cytoplasm. The enzyme catalyses DNA(n) + a 2'-deoxyribonucleoside 5'-triphosphate = DNA(n+1) + diphosphate. Poorly processive, error-prone DNA polymerase involved in untargeted mutagenesis. Copies undamaged DNA at stalled replication forks, which arise in vivo from mismatched or misaligned primer ends. These misaligned primers can be extended by PolIV. Exhibits no 3'-5' exonuclease (proofreading) activity. May be involved in translesional synthesis, in conjunction with the beta clamp from PolIII. This chain is DNA polymerase IV 2 (dinB2), found in Mycobacterium bovis (strain ATCC BAA-935 / AF2122/97).